The chain runs to 180 residues: Bifunctional protein PyrR (180 aa).

The short motif at 101-113 (LIVVDDVLFTGRT) is the PRPP-binding element.

It belongs to the purine/pyrimidine phosphoribosyltransferase family. PyrR subfamily. As to quaternary structure, homodimer and homohexamer; in equilibrium.

The catalysed reaction is UMP + diphosphate = 5-phospho-alpha-D-ribose 1-diphosphate + uracil. Its function is as follows. Regulates transcriptional attenuation of the pyrimidine nucleotide (pyr) operon by binding in a uridine-dependent manner to specific sites on pyr mRNA. This disrupts an antiterminator hairpin in the RNA and favors formation of a downstream transcription terminator, leading to a reduced expression of downstream genes. Also displays a weak uracil phosphoribosyltransferase activity which is not physiologically significant. This chain is Bifunctional protein PyrR, found in Bacillus pumilus (strain SAFR-032).